The primary structure comprises 485 residues: Pyruvate kinase (485 aa).

Arg-33 lines the substrate pocket. The K(+) site is built by Asn-35, Ser-37, Asp-67, and Thr-68. 35 to 38 (NFSH) is an ATP binding site. Residues Arg-74 and Lys-155 each coordinate ATP. Glu-221 contacts Mg(2+). Substrate contacts are provided by Gly-244, Asp-245, and Thr-277. A Mg(2+)-binding site is contributed by Asp-245.

This sequence belongs to the pyruvate kinase family. As to quaternary structure, homotetramer. Requires Mg(2+) as cofactor. K(+) serves as cofactor.

It carries out the reaction pyruvate + ATP = phosphoenolpyruvate + ADP + H(+). It functions in the pathway carbohydrate degradation; glycolysis; pyruvate from D-glyceraldehyde 3-phosphate: step 5/5. In Chlamydia trachomatis serovar L2 (strain ATCC VR-902B / DSM 19102 / 434/Bu), this protein is Pyruvate kinase (pyk).